A 751-amino-acid chain; its full sequence is Photosystem I P700 chlorophyll a apoprotein A1 (751 aa).

The next 8 membrane-spanning stretches (helical) occupy residues 71 to 94 (VFSAHFGQLAIIFTWLSGMYFHGA), 157 to 180 (LYCTAIGALIFAALMLFAGWFHYH), 196 to 220 (LNHHLAGLLGLGSLSWAGHQIHVSL), 292 to 310 (TAHHHLAIAVLFLIAGHMY), 347 to 370 (WHAQLALNLAMLGSLTIIVAHHMY), 386 to 412 (LSLFTHHMWIGGFIIVGAAAHAAIFLV), 434 to 456 (AIISHLNWVCIFLGFHSFGLYIH), and 532 to 550 (FLVHHIHAFTIHVTVLILL). The [4Fe-4S] cluster site is built by Cys574 and Cys583. Helical transmembrane passes span 590–611 (HVFLGLFWMYNAISVVIFHFSW) and 665–687 (LSAYGLFFLGAHFVWAFSLMFLF). Residue His676 participates in chlorophyll a' binding. Positions 684 and 692 each coordinate chlorophyll a. Trp693 contacts phylloquinone. A helical membrane pass occupies residues 725–745 (AVGVAHYLLGGIVTTWAFFLA).

Belongs to the PsaA/PsaB family. In terms of assembly, the PsaA/B heterodimer binds the P700 chlorophyll special pair and subsequent electron acceptors. PSI consists of a core antenna complex that captures photons, and an electron transfer chain that converts photonic excitation into a charge separation. The eukaryotic PSI reaction center is composed of at least 11 subunits. P700 is a chlorophyll a/chlorophyll a' dimer, A0 is one or more chlorophyll a, A1 is one or both phylloquinones and FX is a shared 4Fe-4S iron-sulfur center. serves as cofactor.

The protein resides in the plastid. It localises to the chloroplast thylakoid membrane. It catalyses the reaction reduced [plastocyanin] + hnu + oxidized [2Fe-2S]-[ferredoxin] = oxidized [plastocyanin] + reduced [2Fe-2S]-[ferredoxin]. PsaA and PsaB bind P700, the primary electron donor of photosystem I (PSI), as well as the electron acceptors A0, A1 and FX. PSI is a plastocyanin-ferredoxin oxidoreductase, converting photonic excitation into a charge separation, which transfers an electron from the donor P700 chlorophyll pair to the spectroscopically characterized acceptors A0, A1, FX, FA and FB in turn. Oxidized P700 is reduced on the lumenal side of the thylakoid membrane by plastocyanin. This Welwitschia mirabilis (Tree tumbo) protein is Photosystem I P700 chlorophyll a apoprotein A1.